The chain runs to 92 residues: DNA/RNA-binding protein Alba (92 aa).

N6-acetyllysine is present on Lys-11.

It belongs to the histone-like Alba family. Post-translationally, acetylated. Acetylation at Lys-11 decreases DNA-binding affinity.

The protein localises to the cytoplasm. Its subcellular location is the chromosome. Binds double-stranded DNA tightly but without sequence specificity. Involved in DNA compaction. This Pyrobaculum islandicum (strain DSM 4184 / JCM 9189 / GEO3) protein is DNA/RNA-binding protein Alba.